A 435-amino-acid chain; its full sequence is Galactose/lactose metabolism regulatory protein GAL80 (435 aa).

Met1 is modified (N-acetylmethionine).

The protein to K.lactis GAL80. As to quaternary structure, monomer.

Functionally, this protein is a negative regulator for the gene expression of the lactose/galactose metabolic genes. It binds to GAL4 and so blocks transcriptional activation by it, in the absence of an inducing sugar. This is Galactose/lactose metabolism regulatory protein GAL80 (GAL80) from Saccharomyces cerevisiae (strain ATCC 204508 / S288c) (Baker's yeast).